We begin with the raw amino-acid sequence, 619 residues long: DNA mismatch repair protein MutL (619 aa).

A compositionally biased stretch (low complexity) spans 364 to 375 (EPASAREPAAPR). The tract at residues 364–399 (EPASAREPAAPRYSTSSGATGGRQPAASWPHAQPGY) is disordered.

The protein belongs to the DNA mismatch repair MutL/HexB family.

Its function is as follows. This protein is involved in the repair of mismatches in DNA. It is required for dam-dependent methyl-directed DNA mismatch repair. May act as a 'molecular matchmaker', a protein that promotes the formation of a stable complex between two or more DNA-binding proteins in an ATP-dependent manner without itself being part of a final effector complex. The chain is DNA mismatch repair protein MutL from Citrobacter koseri (strain ATCC BAA-895 / CDC 4225-83 / SGSC4696).